The following is a 305-amino-acid chain: Serine/threonine-protein phosphatase 6 catalytic subunit (305 aa).

Positions 54, 56, 82, and 114 each coordinate Mn(2+). H115 (proton donor) is an active-site residue. Mn(2+) is bound by residues H164 and H238.

This sequence belongs to the PPP phosphatase family. PP-6 (PP-V) subfamily. Mn(2+) serves as cofactor.

It catalyses the reaction O-phospho-L-seryl-[protein] + H2O = L-seryl-[protein] + phosphate. It carries out the reaction O-phospho-L-threonyl-[protein] + H2O = L-threonyl-[protein] + phosphate. The sequence is that of Serine/threonine-protein phosphatase 6 catalytic subunit (ppp6c) from Dictyostelium discoideum (Social amoeba).